The primary structure comprises 324 residues: Taste receptor type 2 member 116 (324 aa).

Over 1–2 (MN) the chain is Extracellular. The chain crosses the membrane as a helical span at residues 3 to 23 (GVLYITFTVILSVEVIIGNFG). At 24 to 55 (NGIIALVNIMDLAKRRKISSVDQILTALAISR) the chain is on the cytoplasmic side. A helical membrane pass occupies residues 56 to 76 (IVLLWLVLVSWWLSMFYPGQW). At 77–94 (MTEGIDVIVHNVWTTLNQ) the chain is on the extracellular side. Residues 95-115 (ISLWLATSFSVFCFLKVANFS) traverse the membrane as a helical segment. Over 116 to 128 (NTIFFYLKIRVKK) the chain is Cytoplasmic. Residues 129–149 (VMTGTLIMFLLLLGLNIIVIN) traverse the membrane as a helical segment. The Extracellular segment spans residues 150–183 (ASKTILIPEYKVNMSNSLNLKNTQISMLFPFANT). The N-linked (GlcNAc...) asparagine glycan is linked to Asn162. A helical transmembrane segment spans residues 184–204 (LFGFIPFAVSLVTFLLLFFSL). Residues 205–236 (WKHQRKMHHGAQGCRDSSTKAHIRVLQTLIAS) lie on the Cytoplasmic side of the membrane. Residues 237–257 (ILLYFVFFLSLVVKVWISLFL) traverse the membrane as a helical segment. At 258 to 261 (ERML) the chain is on the extracellular side. Residues 262–282 (LLLITQAAKIAFPSLHPWVLI) traverse the membrane as a helical segment. The Cytoplasmic segment spans residues 283–324 (LGNAKLRKASLSALQWLRCRHKDEHRRVQRPEVHSCGSSCMP).

Belongs to the G-protein coupled receptor T2R family.

It localises to the membrane. Putative taste receptor which may play a role in the perception of bitterness. This is Taste receptor type 2 member 116 from Rattus norvegicus (Rat).